Reading from the N-terminus, the 60-residue chain is Cytotoxin 4 (60 aa).

4 disulfide bridges follow: C3-C21, C14-C38, C42-C53, and C54-C59.

It belongs to the three-finger toxin family. Short-chain subfamily. Type IA cytotoxin sub-subfamily. As to quaternary structure, monomer in solution; Homodimer and oligomer in the presence of negatively charged lipids forming a pore with a size ranging between 20 and 30 Angstroms. As to expression, expressed by the venom gland.

The protein localises to the secreted. It is found in the target cell membrane. Functionally, shows cytolytic activity on many different cells by forming pore in lipid membranes. In vivo, increases heart rate or kills the animal by cardiac arrest. In addition, it binds to heparin with high affinity, interacts with Kv channel-interacting protein 1 (KCNIP1) in a calcium-independent manner, and binds to integrin alpha-V/beta-3 (ITGAV/ITGB3) with moderate affinity. The chain is Cytotoxin 4 from Naja mossambica (Mozambique spitting cobra).